Consider the following 141-residue polypeptide: Large ribosomal subunit protein bL17 (141 aa).

The protein belongs to the bacterial ribosomal protein bL17 family. In terms of assembly, part of the 50S ribosomal subunit. Contacts protein L32.

The protein is Large ribosomal subunit protein bL17 of Agrobacterium fabrum (strain C58 / ATCC 33970) (Agrobacterium tumefaciens (strain C58)).